The sequence spans 214 residues: Large ribosomal subunit protein uL18 (214 aa).

This sequence belongs to the universal ribosomal protein uL18 family. In terms of assembly, part of the 50S ribosomal subunit. Contacts the 5S and 23S rRNAs.

Its function is as follows. This is one of the proteins that bind and probably mediate the attachment of the 5S RNA into the large ribosomal subunit, where it forms part of the central protuberance. The chain is Large ribosomal subunit protein uL18 from Aeropyrum pernix (strain ATCC 700893 / DSM 11879 / JCM 9820 / NBRC 100138 / K1).